The chain runs to 736 residues: Polyribonucleotide nucleotidyltransferase (736 aa).

Mg(2+)-binding residues include D493 and D499. The KH domain maps to 560-619 (PQHAELVVNPDAIRMIIGPGGKNIKQITTVTGAAIDINDSGKISIFAPTSEAMEQAKQMI). One can recognise an S1 motif domain in the interval 629–703 (GKNYKGKVRK…SRKAVLLEEE (75 aa)). The interval 710–736 (EESSRFSKGNRNGDRSRHNNRERTRRT) is disordered. Residues 720 to 736 (RNGDRSRHNNRERTRRT) show a composition bias toward basic and acidic residues.

The protein belongs to the polyribonucleotide nucleotidyltransferase family. The cofactor is Mg(2+).

It localises to the cytoplasm. It catalyses the reaction RNA(n+1) + phosphate = RNA(n) + a ribonucleoside 5'-diphosphate. Functionally, involved in mRNA degradation. Catalyzes the phosphorolysis of single-stranded polyribonucleotides processively in the 3'- to 5'-direction. This Lawsonia intracellularis (strain PHE/MN1-00) protein is Polyribonucleotide nucleotidyltransferase.